The sequence spans 606 residues: Aspartate--tRNA(Asp/Asn) ligase (606 aa).

L-aspartate is bound at residue glutamate 177. An aspartate region spans residues 201–204; the sequence is QLFK. Arginine 223 is a binding site for L-aspartate. Residues 223-225 and glutamine 232 contribute to the ATP site; that span reads RDE. Histidine 461 serves as a coordination point for L-aspartate. Glutamate 499 lines the ATP pocket. Arginine 506 serves as a coordination point for L-aspartate. 551–554 lines the ATP pocket; sequence GMDR.

It belongs to the class-II aminoacyl-tRNA synthetase family. Type 1 subfamily. As to quaternary structure, homodimer.

It is found in the cytoplasm. It catalyses the reaction tRNA(Asx) + L-aspartate + ATP = L-aspartyl-tRNA(Asx) + AMP + diphosphate. In terms of biological role, aspartyl-tRNA synthetase with relaxed tRNA specificity since it is able to aspartylate not only its cognate tRNA(Asp) but also tRNA(Asn). Reaction proceeds in two steps: L-aspartate is first activated by ATP to form Asp-AMP and then transferred to the acceptor end of tRNA(Asp/Asn). The protein is Aspartate--tRNA(Asp/Asn) ligase of Prochlorococcus marinus (strain MIT 9303).